Reading from the N-terminus, the 125-residue chain is uncharacterized protein (125 aa).

This is an uncharacterized protein from Methanocaldococcus jannaschii (strain ATCC 43067 / DSM 2661 / JAL-1 / JCM 10045 / NBRC 100440) (Methanococcus jannaschii).